The sequence spans 217 residues: Uracil-DNA glycosylase (217 aa).

The active-site Proton acceptor is Asp-62.

Belongs to the uracil-DNA glycosylase (UDG) superfamily. UNG family.

It localises to the cytoplasm. The catalysed reaction is Hydrolyzes single-stranded DNA or mismatched double-stranded DNA and polynucleotides, releasing free uracil.. Its function is as follows. Excises uracil residues from the DNA which can arise as a result of misincorporation of dUMP residues by DNA polymerase or due to deamination of cytosine. The chain is Uracil-DNA glycosylase from Streptococcus equi subsp. equi (strain 4047).